Consider the following 378-residue polypeptide: UDP-4-amino-4-deoxy-L-arabinose--oxoglutarate aminotransferase (378 aa).

Lys182 is modified (N6-(pyridoxal phosphate)lysine).

This sequence belongs to the DegT/DnrJ/EryC1 family. ArnB subfamily. Homodimer. Pyridoxal 5'-phosphate is required as a cofactor.

It catalyses the reaction UDP-4-amino-4-deoxy-beta-L-arabinose + 2-oxoglutarate = UDP-beta-L-threo-pentopyranos-4-ulose + L-glutamate. It functions in the pathway nucleotide-sugar biosynthesis; UDP-4-deoxy-4-formamido-beta-L-arabinose biosynthesis; UDP-4-deoxy-4-formamido-beta-L-arabinose from UDP-alpha-D-glucuronate: step 2/3. The protein operates within bacterial outer membrane biogenesis; lipopolysaccharide biosynthesis. In terms of biological role, catalyzes the conversion of UDP-4-keto-arabinose (UDP-Ara4O) to UDP-4-amino-4-deoxy-L-arabinose (UDP-L-Ara4N). The modified arabinose is attached to lipid A and is required for resistance to polymyxin and cationic antimicrobial peptides. This chain is UDP-4-amino-4-deoxy-L-arabinose--oxoglutarate aminotransferase, found in Aeromonas hydrophila subsp. hydrophila (strain ATCC 7966 / DSM 30187 / BCRC 13018 / CCUG 14551 / JCM 1027 / KCTC 2358 / NCIMB 9240 / NCTC 8049).